We begin with the raw amino-acid sequence, 288 residues long: Ras-like protein 1 (288 aa).

Position 11–18 (11–18 (GGGGVGKS)) interacts with GTP. The Effector region motif lies at 33-41 (YDPTIEDSY). GTP is bound by residues 58–62 (DTAGQ) and 117–120 (NKCD). The segment at 176–288 (EKQQQQQQQQ…KSKNGCCVIV (113 aa)) is disordered. Low complexity-rich tracts occupy residues 178–216 (QQQQQQQQQNANQQGQDQYGQQKDNQQSQFNNQINNNNN) and 246–281 (PNQSQSQRQQQQQQQEPQQQSENQFSGQKQSSSKSK). Cys284 carries the S-palmitoyl cysteine lipid modification. Cys285 carries the cysteine methyl ester modification. Cys285 carries S-farnesyl cysteine lipidation. A propeptide spans 286–288 (VIV) (removed in mature form).

Belongs to the small GTPase superfamily. Ras family.

The protein localises to the cell membrane. The catalysed reaction is GTP + H2O = GDP + phosphate + H(+). With respect to regulation, alternates between an inactive form bound to GDP and an active form bound to GTP. Activated by a guanine nucleotide-exchange factor (GEF) and inactivated by a GTPase-activating protein (GAP). In terms of biological role, required for the regulation of both a MAP kinase signaling pathway and a cAMP signaling pathway. The activation of these pathways contributes to the pathogenicity of the cells through the induction of the morphological transition from the yeast to the polarized filamentous form. This chain is Ras-like protein 1 (RAS1), found in Candida albicans (strain WO-1) (Yeast).